Reading from the N-terminus, the 177-residue chain is B-phycoerythrin beta chain (177 aa).

(2R,3E)-phycoerythrobilin-binding positions include K28, N35, D39, C50, D54, C61, N72, 77–78 (RR), C82, R129, 147–148 (SQ), 154–158 (PQGDC), and C158. N72 is subject to N4-methylasparagine.

Belongs to the phycobiliprotein family. Heterotetramer of 2 different alpha chains and 2 identical beta chains. The subunit composition could comprise any combination of 2 out of 4 different alpha units with an invariant beta unit. Post-translationally, contains three covalently linked phycoerythrobilin chromophores.

It localises to the plastid. The protein localises to the chloroplast thylakoid membrane. In terms of biological role, light-harvesting photosynthetic tetrapyrrole chromophore-protein from the phycobiliprotein complex. This is B-phycoerythrin beta chain (cpeB) from Rhodomonas sp. (strain CS 24) (Chroomonas sp. (strain CS24)).